Here is a 312-residue protein sequence, read N- to C-terminus: Putative HTH-type transcriptional regulatory protein Ta1363 (312 aa).

Positions 133–186 (LREMRMKMSLSIGYLSHYLGVSRRSVSLYENGSSATIDVFLKLQEIIKSDLVDH) constitute an HTH cro/C1-type domain. The segment at residues 144–163 (IGYLSHYLGVSRRSVSLYEN) is a DNA-binding region (H-T-H motif).

This Thermoplasma acidophilum (strain ATCC 25905 / DSM 1728 / JCM 9062 / NBRC 15155 / AMRC-C165) protein is Putative HTH-type transcriptional regulatory protein Ta1363.